The chain runs to 181 residues: MDELTAQALRDFTTRYCDAWHEKHHSWPLSEELYGVPSPCIISTTSDAVYWQPQPFVGEQNLAAVERAFDIVLQPAIQTFYTTQFAGDMHAQFAEHTLTLLQTWSEDDFRRVQENLIGHLVTQKRLKLSPTLFIATLENELDVISLCNLSGEVCKETLGTRNRQVLAPSLAEFLKQLNPLL.

It belongs to the Syd family.

It is found in the cell inner membrane. Interacts with the SecY protein in vivo. May bind preferentially to an uncomplexed state of SecY, thus functioning either as a chelating agent for excess SecY in the cell or as a regulatory factor that negatively controls the translocase function. This is Protein Syd from Escherichia fergusonii (strain ATCC 35469 / DSM 13698 / CCUG 18766 / IAM 14443 / JCM 21226 / LMG 7866 / NBRC 102419 / NCTC 12128 / CDC 0568-73).